We begin with the raw amino-acid sequence, 396 residues long: Phosphoglycerate kinase (396 aa).

Substrate-binding positions include 21–23 (DFN), arginine 36, 59–62 (HFDR), arginine 118, and arginine 151. Residues lysine 201, glutamate 323, and 353-356 (GGDT) contribute to the ATP site.

The protein belongs to the phosphoglycerate kinase family. As to quaternary structure, monomer.

It is found in the cytoplasm. It catalyses the reaction (2R)-3-phosphoglycerate + ATP = (2R)-3-phospho-glyceroyl phosphate + ADP. The protein operates within carbohydrate degradation; glycolysis; pyruvate from D-glyceraldehyde 3-phosphate: step 2/5. In Caulobacter sp. (strain K31), this protein is Phosphoglycerate kinase.